The sequence spans 242 residues: HTH domain-truncated transcriptional regulator QseD (242 aa).

This sequence belongs to the LysR transcriptional regulatory family.

Functionally, represses EHEC virulence expression. Down-regulates expression of LEE (locus of enterocyte effacement) and iraD genes, and alters AE (attaching and effacing) lesion formation. May regulate transcription through interactions with another HTH DNA-binding protein. The polypeptide is HTH domain-truncated transcriptional regulator QseD (qseD) (Escherichia coli O157:H7).